Consider the following 498-residue polypeptide: Excisase C (498 aa).

Positions 263-446 (KIIYSFDLFE…FGIENRKKAF (184 aa)) constitute a Tyr recombinase domain. Active-site residues include Arg-306, Lys-336, Arg-401, and His-424. The active-site O-(3'-phospho-DNA)-tyrosine intermediate is Tyr-433.

Belongs to the XisA/XisC recombinase family.

Essential for DNA excision. Site specific recombinase necessary for the excision of the 10.5 kb hupL element during heterocyst differentiation. The protein is Excisase C (xisC) of Nostoc sp. (strain PCC 7120 / SAG 25.82 / UTEX 2576).